Reading from the N-terminus, the 340-residue chain is HTH-type transcriptional regulator PtxS (340 aa).

In terms of domain architecture, HTH lacI-type spans 12 to 67 (VTINQVAEAAGVSKASVSRYIGGDRQLLADATARRIERAIDQLDYRPNQMARGLKR). Positions 14–33 (INQVAEAAGVSKASVSRYIG) form a DNA-binding region, H-T-H motif.

As to quaternary structure, interacts with PtxR in the absence of 2-ketogluconate. Binding of the 2-ketogluconate effector to PtxS causes PtxS/PtxR complex dissociation.

2-ketogluconate acts as a molecular effector and causes dissociation of the PtxS/PtxR complex. Its function is as follows. Negatively regulates glucose metabolism by binding directly to the promoter region of the kgu and gad operons. It also negatively regulates its own synthesis. Functionally, in addition, in pathogenic strains, PtxS modulates PtxR activity in response to 2-ketogluconate. In the presence of PtxR, which also binds to the kgu and gad promoter regions, PtxS and PtxR form a tight complex, creating a DNA-loop that prevents RNA polymerase promoter access and expression of the glucose metabolism genes. Binding of the 2-ketogluconate effector to PtxS causes PtxS/PtxR complex dissociation and leads to the dissolution of the repression DNA-loop, facilitating the entry of the RNA polymerase and enabling the transcription of the genes. Also plays an important role in the regulation of the expression of the virulence factor exotoxin A (toxA). PtxS does not bind directly to the toxA promoter but negatively regulates the production of exotoxin A by binding to PtxR and interfering with its positive regulator activity. In the presence of 2-ketogluconate, PtxS is released and PtxR can recruit RNA polymerase. The polypeptide is HTH-type transcriptional regulator PtxS (Pseudomonas aeruginosa (strain ATCC 15692 / DSM 22644 / CIP 104116 / JCM 14847 / LMG 12228 / 1C / PRS 101 / PAO1)).